Here is a 570-residue protein sequence, read N- to C-terminus: Sulfite reductase [NADPH] hemoprotein beta-component (570 aa).

Positions 434, 440, 479, and 483 each coordinate [4Fe-4S] cluster. Cysteine 483 lines the siroheme pocket.

This sequence belongs to the nitrite and sulfite reductase 4Fe-4S domain family. In terms of assembly, alpha(8)-beta(8). The alpha component is a flavoprotein, the beta component is a hemoprotein. It depends on siroheme as a cofactor. [4Fe-4S] cluster is required as a cofactor.

It catalyses the reaction hydrogen sulfide + 3 NADP(+) + 3 H2O = sulfite + 3 NADPH + 4 H(+). The protein operates within sulfur metabolism; hydrogen sulfide biosynthesis; hydrogen sulfide from sulfite (NADPH route): step 1/1. Its function is as follows. Component of the sulfite reductase complex that catalyzes the 6-electron reduction of sulfite to sulfide. This is one of several activities required for the biosynthesis of L-cysteine from sulfate. The protein is Sulfite reductase [NADPH] hemoprotein beta-component of Escherichia coli O7:K1 (strain IAI39 / ExPEC).